A 591-amino-acid chain; its full sequence is uncharacterized protein (591 aa).

4 consecutive transmembrane segments (helical) span residues V389–I409, G411–L431, G538–S558, and P571–L591.

The protein resides in the membrane. This is an uncharacterized protein from Mycoplasma (Bacteriophage L2).